A 95-amino-acid polypeptide reads, in one-letter code: Secretoglobin family 1C member 1 (95 aa).

An N-terminal signal peptide occupies residues 1–23 (MKGSSALLLVALSLLCVCGLTRA).

This sequence belongs to the secretoglobin family.

It localises to the secreted. This Mus musculus (Mouse) protein is Secretoglobin family 1C member 1 (Scgb1c1).